The sequence spans 173 residues: RNA pyrophosphohydrolase (173 aa).

Residues Gly6 to Arg149 form the Nudix hydrolase domain. A Nudix box motif is present at residues Gly38–Gly59.

It belongs to the Nudix hydrolase family. RppH subfamily. A divalent metal cation serves as cofactor.

Accelerates the degradation of transcripts by removing pyrophosphate from the 5'-end of triphosphorylated RNA, leading to a more labile monophosphorylated state that can stimulate subsequent ribonuclease cleavage. This chain is RNA pyrophosphohydrolase, found in Thioalkalivibrio sulfidiphilus (strain HL-EbGR7).